A 107-amino-acid chain; its full sequence is MKIKKGDLVQVITGKDKGKQGKVIAAFPREDRVLVEGVNRVKKHTKAGPTARGSQAGGIVTTEAPIHVSNVQLVVEKDGNKVVTRVGYRFDDEGNKVRVAKRTGEDI.

It belongs to the universal ribosomal protein uL24 family. In terms of assembly, part of the 50S ribosomal subunit.

Its function is as follows. One of two assembly initiator proteins, it binds directly to the 5'-end of the 23S rRNA, where it nucleates assembly of the 50S subunit. One of the proteins that surrounds the polypeptide exit tunnel on the outside of the subunit. This is Large ribosomal subunit protein uL24 from Streptomyces coelicolor (strain ATCC BAA-471 / A3(2) / M145).